The sequence spans 341 residues: NADH-ubiquinone oxidoreductase chain 2 (341 aa).

Helical transmembrane passes span 8–28 (ILFT…NSWL), 61–81 (FLTQ…LMLA), 95–115 (MIIM…FWFP), 121–141 (LTWM…LMLI), 146–166 (IKNL…IGGL), 174–194 (LMAF…MISE), 195–215 (SIWL…TFMF), 238–258 (FSLF…GFLP), 273–293 (FLLT…LRIC), and 321–341 (LIMT…FFML).

This sequence belongs to the complex I subunit 2 family.

The protein resides in the mitochondrion inner membrane. It catalyses the reaction a ubiquinone + NADH + 5 H(+)(in) = a ubiquinol + NAD(+) + 4 H(+)(out). Functionally, core subunit of the mitochondrial membrane respiratory chain NADH dehydrogenase (Complex I) that is believed to belong to the minimal assembly required for catalysis. Complex I functions in the transfer of electrons from NADH to the respiratory chain. The immediate electron acceptor for the enzyme is believed to be ubiquinone. The protein is NADH-ubiquinone oxidoreductase chain 2 (mt:ND2) of Drosophila yakuba (Fruit fly).